Reading from the N-terminus, the 264-residue chain is Thymidylate synthase (264 aa).

DUMP is bound at residue Arg21. Residue His51 coordinates (6R)-5,10-methylene-5,6,7,8-tetrahydrofolate. 126-127 is a binding site for dUMP; that stretch reads RR. The active-site Nucleophile is Cys146. DUMP is bound by residues 166–169, Asn177, and 207–209; these read RSAD and HIY. (6R)-5,10-methylene-5,6,7,8-tetrahydrofolate is bound at residue Asp169. (6R)-5,10-methylene-5,6,7,8-tetrahydrofolate is bound at residue Ser263.

Belongs to the thymidylate synthase family. Bacterial-type ThyA subfamily. As to quaternary structure, homodimer.

It is found in the cytoplasm. It carries out the reaction dUMP + (6R)-5,10-methylene-5,6,7,8-tetrahydrofolate = 7,8-dihydrofolate + dTMP. Its pathway is pyrimidine metabolism; dTTP biosynthesis. Functionally, catalyzes the reductive methylation of 2'-deoxyuridine-5'-monophosphate (dUMP) to 2'-deoxythymidine-5'-monophosphate (dTMP) while utilizing 5,10-methylenetetrahydrofolate (mTHF) as the methyl donor and reductant in the reaction, yielding dihydrofolate (DHF) as a by-product. This enzymatic reaction provides an intracellular de novo source of dTMP, an essential precursor for DNA biosynthesis. The sequence is that of Thymidylate synthase from Phocaeicola vulgatus (strain ATCC 8482 / DSM 1447 / JCM 5826 / CCUG 4940 / NBRC 14291 / NCTC 11154) (Bacteroides vulgatus).